A 589-amino-acid chain; its full sequence is Leucine-rich repeat and immunoglobulin-like domain-containing nogo receptor-interacting protein 3 (589 aa).

A signal peptide spans 1–23; sequence MTCWLHMLGLHLLLLPTAPLAAG. The LRRNT domain occupies 24-53; that stretch reads CPARCECSASTRTVACGRRRLTAIPEGIPA. Over 24 to 528 the chain is Extracellular; sequence CPARCECSAS…LDLTTILVST (505 aa). 11 LRR repeats span residues 54–75, 78–99, 102–123, 126–147, 150–171, 174–195, 206–227, 246–267, 270–291, 294–315, and 318–339; these read ETRM…DLAS, TLEE…AFAN, RLRV…VFTH, SLTL…SFQD, SLQR…AFAG, GLAE…SLGH, HLAI…SHLE, NLTS…ALRQ, HLTC…SFRD, RLRE…AFVG, and QIRL…TFHS. An N-linked (GlcNAc...) asparagine glycan is attached at Asn184. 3 N-linked (GlcNAc...) asparagine glycosylation sites follow: Asn246, Asn256, and Asn275. Asn323 carries an N-linked (GlcNAc...) asparagine glycan. The region spanning 351–405 is the LRRCT domain; sequence NPLACDCRLLWIVQRRKTLNFDGRLPACATPAEVRGDALHNLPDSVLFEYFVCRK. The Ig-like C2-type domain maps to 406 to 495; sequence PKIRERRLQH…GNDTYFATLT (90 aa). Residues Cys428 and Cys479 are joined by a disulfide bond. Asn487, Asn501, and Asn509 each carry an N-linked (GlcNAc...) asparagine glycan. Residues 529-549 traverse the membrane as a helical segment; the sequence is AMGCITFLGVVLFCFLLLFVW. Residues 550–589 lie on the Cytoplasmic side of the membrane; it reads SRGRGQHKNNFSVEYSFRKVDGPAAAAGQGGARKFNMKMI.

Its subcellular location is the membrane. In Mus musculus (Mouse), this protein is Leucine-rich repeat and immunoglobulin-like domain-containing nogo receptor-interacting protein 3 (Lingo3).